The sequence spans 223 residues: Putative NAD(P)H nitroreductase SAB2397c (223 aa).

The protein belongs to the nitroreductase family. Requires FMN as cofactor.

The protein is Putative NAD(P)H nitroreductase SAB2397c of Staphylococcus aureus (strain bovine RF122 / ET3-1).